The chain runs to 543 residues: Carboxypeptidase Y homolog A (543 aa).

The N-terminal stretch at 1 to 17 is a signal peptide; the sequence is MRVLPATLLVGAATAAA. Residues 18–124 constitute a propeptide that is removed on maturation; sequence PPFQQILGLP…KLEAYDLRVK (107 aa). 5 cysteine pairs are disulfide-bonded: C179-C419, C313-C327, C337-C360, C344-C353, and C382-C389. N210 carries N-linked (GlcNAc...) asparagine glycosylation. S266 is a catalytic residue. Residue D458 is part of the active site. Residue N509 is glycosylated (N-linked (GlcNAc...) asparagine). Residue H520 is part of the active site.

The protein belongs to the peptidase S10 family.

The protein resides in the vacuole. It catalyses the reaction Release of a C-terminal amino acid with broad specificity.. Vacuolar carboxypeptidase involved in degradation of small peptides. Digests preferentially peptides containing an aliphatic or hydrophobic residue in P1' position, as well as methionine, leucine or phenylalanine in P1 position of ester substrate. This is Carboxypeptidase Y homolog A (cpyA) from Aspergillus fumigatus (strain ATCC MYA-4609 / CBS 101355 / FGSC A1100 / Af293) (Neosartorya fumigata).